Reading from the N-terminus, the 83-residue chain is Protein CASPARIAN STRIP INTEGRITY FACTOR 1 (83 aa).

Positions 1–22 are cleaved as a signal peptide; that stretch reads MGMSPLTVKKLGFIFMIVSASA. Positions 59–83 are disordered; that stretch reads MNTKDYGNNSPSPRLERPPFKLIPN. Position 64 is a sulfotyrosine (Tyr64). Hydroxyproline is present on residues Pro69 and Pro71.

As to quaternary structure, interacts with the specific receptor kinases GSO1 and GSO2. Expressed exclusively in the root stele.

Its function is as follows. Peptide hormone required for contiguous Casparian strip diffusion barrier formation in roots via the regulation of CASPs protein expression and distribution in a GSO1-GSO2 signaling pathway. The Casparian strip is required for ion homeostasis (e.g. iron and potassium ions). The chain is Protein CASPARIAN STRIP INTEGRITY FACTOR 1 from Arabidopsis thaliana (Mouse-ear cress).